The sequence spans 463 residues: ATP-dependent protease ATPase subunit HslU (463 aa).

Residues isoleucine 19 and 61–66 (GVGKTE) contribute to the ATP site. A disordered region spans residues 154-175 (FGGNQNSNQTSDAQEDDEIEKK). The span at 156–165 (GNQNSNQTSD) shows a compositional bias: polar residues. ATP-binding residues include aspartate 277, glutamate 341, and arginine 413.

The protein belongs to the ClpX chaperone family. HslU subfamily. In terms of assembly, a double ring-shaped homohexamer of HslV is capped on each side by a ring-shaped HslU homohexamer. The assembly of the HslU/HslV complex is dependent on binding of ATP.

The protein localises to the cytoplasm. In terms of biological role, ATPase subunit of a proteasome-like degradation complex; this subunit has chaperone activity. The binding of ATP and its subsequent hydrolysis by HslU are essential for unfolding of protein substrates subsequently hydrolyzed by HslV. HslU recognizes the N-terminal part of its protein substrates and unfolds these before they are guided to HslV for hydrolysis. This is ATP-dependent protease ATPase subunit HslU from Bacillus mycoides (strain KBAB4) (Bacillus weihenstephanensis).